The primary structure comprises 29 residues: Potassium-transporting ATPase KdpF subunit (29 aa).

A helical membrane pass occupies residues L2–V22.

The protein belongs to the KdpF family. In terms of assembly, the system is composed of three essential subunits: KdpA, KdpB and KdpC. The complex also contains KdpF, a small non-essential subunit.

Its subcellular location is the cell membrane. Part of the high-affinity ATP-driven potassium transport (or Kdp) system, which catalyzes the hydrolysis of ATP coupled with the electrogenic transport of potassium into the cytoplasm. This subunit may be involved in stabilization of the complex. The Kdp system is essential for growth under K(+) limitation, and for survival under desiccation and salt crystal inclusion. In Halobacterium salinarum (strain ATCC 29341 / DSM 671 / R1), this protein is Potassium-transporting ATPase KdpF subunit.